We begin with the raw amino-acid sequence, 197 residues long: Dermorphin-1 (197 aa).

The signal sequence occupies residues 1–20 (MSFLKKSLLLILFLGLVSLS). Residues 21–45 (VCKEEKRETEEENENEENHEEGSEM) constitute a propeptide that is removed on maturation. The tract at residues 24-197 (EEKRETEEEN…GYPSGEAKKM (174 aa)) is disordered. Over residues 30 to 39 (EEENENEENH) the composition is skewed to acidic residues. Residues 40–62 (EEGSEMKRYMFHLMDGEAKKRDS) are compositionally biased toward basic and acidic residues. Residue Met-49 is modified to D-methionine. At Asp-54 the chain carries Aspartic acid 1-amide. Residues 56–77 (EAKKRDSEENEIEENHEEGSEM) constitute a propeptide that is removed on maturation. Residue Ala-81 is modified to D-alanine (Ala). Ser-86 is subject to Serine amide. Over residues 88–97 (EAKKIKRVSE) the composition is skewed to basic and acidic residues. A propeptide spanning residues 88–112 (EAKKIKRVSEEENENEENHEEGSEM) is cleaved from the precursor. Ala-116 carries the post-translational modification D-alanine (Ala). Ser-121 carries the serine amide modification. A compositionally biased stretch (basic and acidic residues) spans 123–132 (EAKKIKRESE). The propeptide occupies 123-147 (EAKKIKRESEEEKEIEENHEEGSEM). Ala-151 is subject to D-alanine (Ala). A Serine amide modification is found at Ser-156. Positions 158 to 182 (EAKKIKRESEEENENEENHEEGSEM) are excised as a propeptide. Residues 167–176 (EEENENEENH) show a composition bias toward acidic residues. Residue Ala-186 is modified to D-alanine (Ala). Ser-191 is subject to Serine amide. The propeptide occupies 193–197 (EAKKM).

Belongs to the frog skin active peptide (FSAP) family. Dermorphin subfamily. In terms of tissue distribution, expressed by the skin glands.

It localises to the secreted. Dermorphin has a very potent opiate-like activity. It has high affinity and selectivity for mu-type opioid receptors. Its function is as follows. Deltorphin has a very potent opiate-like activity. It has high affinity and selectivity for delta-type opioid receptors. The polypeptide is Dermorphin-1 (Phyllomedusa sauvagei (Sauvage's leaf frog)).